Here is a 161-residue protein sequence, read N- to C-terminus: 4-hydroxybenzoyl-CoA reductase subunit gamma (161 aa).

Residues 3 to 79 enclose the 2Fe-2S ferredoxin-type domain; sequence NILRLTLNGR…GKKVETVESL (77 aa). Residues Cys-41, Cys-46, Cys-49, Cys-61, Cys-100, Cys-103, Cys-135, and Cys-137 each coordinate [2Fe-2S] cluster.

In terms of assembly, heterohexamer of two alpha, two beta and two gamma subunits. The cofactor is [2Fe-2S] cluster.

The catalysed reaction is oxidized 2[4Fe-4S]-[ferredoxin] + benzoyl-CoA + H2O = 4-hydroxybenzoyl-CoA + reduced 2[4Fe-4S]-[ferredoxin] + 2 H(+). Its activity is regulated as follows. Inactivated by low concentrations of cyanide in vitro. Functionally, component of a complex that catalyzes the reductive dehydroxylation of 4-hydroxybenzoyl-CoA to benzoyl-CoA. Reaction is not reversible. Is a key enzyme in the anaerobic degradation of phenolic compounds. This is 4-hydroxybenzoyl-CoA reductase subunit gamma (hcrC) from Thauera aromatica.